The primary structure comprises 722 residues: Polymerase basic protein 2 (722 aa).

As to quaternary structure, the RNA polymerase is composed of three subunits: PB1, PB2 and PA.

It localises to the virion. It is found in the host nucleus. In terms of biological role, involved in transcription initiation and cap-stealing mechanism, in which cellular capped pre-mRNA are used to generate primers for viral transcription. Binds the cap of the target pre-RNA which is subsequently cleaved by PB1. May play a role in genome replication. This Gadus morhua (Atlantic cod) protein is Polymerase basic protein 2.